The following is a 1355-amino-acid chain: Phosphoribosylformylglycinamidine synthase (1355 aa).

ATP contacts are provided by residues glycine 326–aspartate 337 and isoleucine 406–phenylalanine 408. Positions 743, 747, and 911 each coordinate Mg(2+). ATP is bound at residue serine 913. In terms of domain architecture, Glutamine amidotransferase type-1 spans lysine 1087–glutamate 1325. Cysteine 1182 serves as the catalytic Nucleophile. Catalysis depends on residues histidine 1310 and glutamate 1312.

It in the N-terminal section; belongs to the FGAMS family.

It is found in the cytoplasm. The catalysed reaction is N(2)-formyl-N(1)-(5-phospho-beta-D-ribosyl)glycinamide + L-glutamine + ATP + H2O = 2-formamido-N(1)-(5-O-phospho-beta-D-ribosyl)acetamidine + L-glutamate + ADP + phosphate + H(+). It functions in the pathway purine metabolism; IMP biosynthesis via de novo pathway; 5-amino-1-(5-phospho-D-ribosyl)imidazole from N(2)-formyl-N(1)-(5-phospho-D-ribosyl)glycinamide: step 1/2. In terms of biological role, phosphoribosylformylglycinamidine synthase involved in the purines biosynthetic pathway. Catalyzes the ATP-dependent conversion of formylglycinamide ribonucleotide (FGAR) and glutamine to yield formylglycinamidine ribonucleotide (FGAM) and glutamate. This chain is Phosphoribosylformylglycinamidine synthase (purL), found in Dictyostelium discoideum (Social amoeba).